We begin with the raw amino-acid sequence, 207 residues long: Abscisic acid receptor PYL9 (207 aa).

Positions 31–197 are START-like; it reads FPPSTTTATT…NLQMLAAVAE (167 aa). Abscisate contacts are provided by residues K74, 104–109, 131–137, and E162; these read ASTSTE and RLRNYRS. The Gate loop motif lies at 100–104; that stretch reads SGLPA. Positions 130 to 132 match the Latch loop motif; the sequence is HRL.

This sequence belongs to the PYR/PYL/RCAR abscisic acid intracellular receptor family. As to quaternary structure, homodimer. Interacts with PP2C06. Interacts with PP2C50. Binding to PP2C50 is dependent on the presence of abscisic acid (ABA). Interacts with PP2C30 and PP2C53. Binding to PP2C30 and PP2C53 is dependent on the presence of ABA.

The protein resides in the cytoplasm. The protein localises to the cytosol. Its subcellular location is the nucleus. Involved in abscisic acid (ABA) signaling during seed germination and abiotic stress response. Acts as a positive regulator of ABA-mediated inhibition of seed germination, and tolerance to drought and cold stresses. Inhibits the activity of the protein phosphatases PP2C06 and PP2C09 when activated by abscisic acid (ABA). This Oryza sativa subsp. japonica (Rice) protein is Abscisic acid receptor PYL9.